A 147-amino-acid chain; its full sequence is Large ribosomal subunit protein uL13 (147 aa).

Belongs to the universal ribosomal protein uL13 family. In terms of assembly, part of the 50S ribosomal subunit.

Functionally, this protein is one of the early assembly proteins of the 50S ribosomal subunit, although it is not seen to bind rRNA by itself. It is important during the early stages of 50S assembly. The chain is Large ribosomal subunit protein uL13 from Arthrobacter sp. (strain FB24).